The following is a 320-amino-acid chain: Polyketide transferase FFUJ_12241 (320 aa).

Residues 58 to 298 are abhydrolase domain; the sequence is RDITCLAWDP…ILKGKGHLDW (241 aa).

Belongs to the polyketide transferase af380 family.

In terms of biological role, polyketide transferase; part of the gene cluster that mediates the biosynthesis of fujikurins A-D, secondary metabolites playing a role during rice infection. The polyketide synthase PKS19 acts with the trans-enoyl reductase FFUJ_12240 and the polyketide transferase FFUJ_12241 to produce fujikurins, however, the biosynthesis pathway has not been identified yet. The chain is Polyketide transferase FFUJ_12241 from Gibberella fujikuroi (strain CBS 195.34 / IMI 58289 / NRRL A-6831) (Bakanae and foot rot disease fungus).